We begin with the raw amino-acid sequence, 569 residues long: Vacuolar protein sorting-associated protein 53 B (569 aa).

Coiled coils occupy residues 53–90, 125–145, and 295–316; these read TRAK…VQDI, QVMT…AINE, and KEKS…FERE.

Belongs to the VPS53 family. As to quaternary structure, component of the Golgi-associated retrograde protein (GARP) complex.

Its subcellular location is the cytoplasm. The protein resides in the golgi apparatus. It is found in the trans-Golgi network membrane. The protein localises to the endosome membrane. Functionally, involved in retrograde transport from early and late endosomes to late Golgi, leading to the membrane fusion between late Golgi and endosomal vesicles. This Arabidopsis thaliana (Mouse-ear cress) protein is Vacuolar protein sorting-associated protein 53 B.